Consider the following 232-residue polypeptide: MAHQGKRVRAANEGIDRLKLYPLDEALALLKARTTAKFDETIEVAINLGVDPRHADQMVRGVCNLPNGSGRTVRVAVFARGAKADEAKAAGADIVGAEDLLETIQGGTIEFDRCIATPDLMPLVGRLGKVLGPRGLMPNPKVGTVTMDVKGAVAAAKGGAVEFRVEKAGIIHGGIGKASFPADKLAENIRAFVDAVVKAKPTGAKGTYVQRVAVSSTMGPGIKVDTASVVTA.

It belongs to the universal ribosomal protein uL1 family. Part of the 50S ribosomal subunit.

In terms of biological role, binds directly to 23S rRNA. The L1 stalk is quite mobile in the ribosome, and is involved in E site tRNA release. Functionally, protein L1 is also a translational repressor protein, it controls the translation of the L11 operon by binding to its mRNA. This Azorhizobium caulinodans (strain ATCC 43989 / DSM 5975 / JCM 20966 / LMG 6465 / NBRC 14845 / NCIMB 13405 / ORS 571) protein is Large ribosomal subunit protein uL1.